Here is a 91-residue protein sequence, read N- to C-terminus: Probable Fe(2+)-trafficking protein (91 aa).

Belongs to the Fe(2+)-trafficking protein family. In terms of assembly, monomer.

Functionally, could be a mediator in iron transactions between iron acquisition and iron-requiring processes, such as synthesis and/or repair of Fe-S clusters in biosynthetic enzymes. The polypeptide is Probable Fe(2+)-trafficking protein (Klebsiella pneumoniae (strain 342)).